Here is a 429-residue protein sequence, read N- to C-terminus: Adenylosuccinate synthetase (429 aa).

GTP is bound by residues 13–19 (GDEGKGK) and 41–43 (GHT). Asp-14 acts as the Proton acceptor in catalysis. Mg(2+) contacts are provided by Asp-14 and Gly-41. IMP contacts are provided by residues 14 to 17 (DEGK), 39 to 42 (NAGH), Thr-130, Arg-144, Gln-224, Thr-239, and Arg-303. His-42 (proton donor) is an active-site residue. 299 to 305 (ATTGRAR) lines the substrate pocket. Residues Arg-305, 331-333 (KLD), and 412-414 (STG) contribute to the GTP site.

This sequence belongs to the adenylosuccinate synthetase family. As to quaternary structure, homodimer. Mg(2+) is required as a cofactor.

It localises to the cytoplasm. It carries out the reaction IMP + L-aspartate + GTP = N(6)-(1,2-dicarboxyethyl)-AMP + GDP + phosphate + 2 H(+). It functions in the pathway purine metabolism; AMP biosynthesis via de novo pathway; AMP from IMP: step 1/2. In terms of biological role, plays an important role in the de novo pathway of purine nucleotide biosynthesis. Catalyzes the first committed step in the biosynthesis of AMP from IMP. This is Adenylosuccinate synthetase from Psychrobacter sp. (strain PRwf-1).